Consider the following 700-residue polypeptide: Calpain-2 catalytic subunit (700 aa).

Alanine 2 is subject to N-acetylalanine. A propeptide spans 2 to 19 (anchors to the small subunit); that stretch reads AGIAMKLAKDREAAEGLG. Residues 45–344 form the Calpain catalytic domain; it reads LFQDPSFPAL…YSRLEICNLT (300 aa). Isoleucine 89, glycine 91, and aspartate 96 together coordinate Ca(2+). Cysteine 105 is a catalytic residue. Positions 175, 229, and 230 each coordinate Ca(2+). Catalysis depends on residues histidine 262 and asparagine 286. Ca(2+) is bound by residues glutamate 292, aspartate 299, glutamine 319, and glutamate 323. The domain III stretch occupies residues 345–514; it reads PDTLTCDSYK…KKADYQTVDD (170 aa). The segment at 515-529 is linker; it reads EIEANIEEIEANEED. The domain IV stretch occupies residues 530 to 700; that stretch reads IGDGFRRLFA…LISWLSFSVL (171 aa). Positions 542, 545, 547, 552, 585, 587, 589, 591, 596, 615, 617, 619, 621, 626, 658, and 661 each coordinate Ca(2+). EF-hand domains lie at 572 to 605 and 602 to 637; these read FSIE…TKIQ and TKIQ…AGFK. The EF-hand 3 domain maps to 667–700; sequence VRLEILFKIFKQLDPENTGTIQLDLISWLSFSVL.

This sequence belongs to the peptidase C2 family. Forms a heterodimer with a small (regulatory) subunit (CAPNS1). Interacts with CPEB3; this leads to cleavage of CPEB3. It depends on Ca(2+) as a cofactor. In terms of tissue distribution, ubiquitous.

Its subcellular location is the cytoplasm. The protein localises to the cell membrane. The enzyme catalyses Broad endopeptidase specificity.. Activated by 200-1000 micromolar concentrations of calcium and inhibited by calpastatin. Calcium-regulated non-lysosomal thiol-protease which catalyze limited proteolysis of substrates involved in cytoskeletal remodeling and signal transduction. Proteolytically cleaves MYOC at 'Arg-226'. Proteolytically cleaves CPEB3 following neuronal stimulation which abolishes CPEB3 translational repressor activity, leading to translation of CPEB3 target mRNAs. The sequence is that of Calpain-2 catalytic subunit (Capn2) from Rattus norvegicus (Rat).